Here is a 256-residue protein sequence, read N- to C-terminus: Calsenilin (256 aa).

A disordered region spans residues 1–22 (MQRTKEAVKASDGNLLGDPGRI). Residue Lys26 forms a Glycyl lysine isopeptide (Lys-Gly) (interchain with G-Cter in SUMO1) linkage. S-palmitoyl cysteine attachment occurs at residues Cys45 and Cys46. Phosphoserine is present on residues Ser60 and Ser63. One can recognise an EF-hand 1; degenerate domain in the interval 67-123 (LELSTVRHQPEGLDQLQAQTKFTKKELQSLYRGFKNECPTGLVDEDTFKLIYSQFFP). Residue Lys90 forms a Glycyl lysine isopeptide (Lys-Gly) (interchain with G-Cter in SUMO1) linkage. EF-hand domains follow at residues 126-161 (DATT…LLRG), 162-197 (TVHE…IYDM), and 210-245 (APLE…DENI). Positions 175, 177, 179, 181, 186, 223, 225, 227, and 234 each coordinate Ca(2+). The segment at 243-256 (ENIMNSMQLFENVI) is interaction with KCND2.

Belongs to the recoverin family. In terms of assembly, binds to DNA as a homomultimer. Dimerization is induced by binding to calcium. Interacts with the C-terminus of PSEN1 and PSEN2 and with PSEN2 CTF subunit. Associates with KCN1. Component of heteromultimeric potassium channels. Identified in potassium channel complexes containing KCND1, KCND2, KCND3, KCNIP1, KCNIP2, KCNIP3, KCNIP4, DPP6 and DPP10. Interacts with KCND2 and KCND3. Palmitoylated. Palmitoylation enhances association with the plasma membrane. In terms of processing, proteolytically cleaved by caspase-3. In terms of tissue distribution, highly expressed in brain. Isoform 1 or isoform 4 (T+ forms) are expressed at equal levels with isoform 2 or isoform 3 (T- forms). Primarily detected in the layer V and deep layer VI of the cerebral cortex, the hippocampus, and the entire cerebellum. Expressed at low levels in testis. Also expressed in heart.

It is found in the cytoplasm. Its subcellular location is the cell membrane. The protein localises to the endoplasmic reticulum. The protein resides in the golgi apparatus. It localises to the nucleus. Calcium-dependent transcriptional repressor that binds to the DRE element of genes including PDYN and FOS. Affinity for DNA is reduced upon binding to calcium and enhanced by binding to magnesium. Seems to be involved in nociception. In terms of biological role, regulatory subunit of Kv4/D (Shal)-type voltage-gated rapidly inactivating A-type potassium channels, such as KCND2/Kv4.2 and KCND3/Kv4.3. Modulates channel expression at the cell membrane, gating characteristics, inactivation kinetics and rate of recovery from inactivation in a calcium-dependent and isoform-specific manner. Its function is as follows. May play a role in the regulation of PSEN2 proteolytic processing and apoptosis. Together with PSEN2 involved in modulation of amyloid-beta formation. The polypeptide is Calsenilin (Kcnip3) (Mus musculus (Mouse)).